Reading from the N-terminus, the 350-residue chain is S-adenosylmethionine:tRNA ribosyltransferase-isomerase (350 aa).

It belongs to the QueA family. In terms of assembly, monomer.

It is found in the cytoplasm. It carries out the reaction 7-aminomethyl-7-carbaguanosine(34) in tRNA + S-adenosyl-L-methionine = epoxyqueuosine(34) in tRNA + adenine + L-methionine + 2 H(+). It functions in the pathway tRNA modification; tRNA-queuosine biosynthesis. In terms of biological role, transfers and isomerizes the ribose moiety from AdoMet to the 7-aminomethyl group of 7-deazaguanine (preQ1-tRNA) to give epoxyqueuosine (oQ-tRNA). The sequence is that of S-adenosylmethionine:tRNA ribosyltransferase-isomerase from Bacillus cereus (strain B4264).